The following is a 249-amino-acid chain: DDPYNPYKYSDDNPYYNYYXXXERPRPGSRYRPGYGTGYFQYGLPDLVPDPYYIQASTYVQKMSMYNLRCAAEENCLASTAYRADVRDYDHRVLLRFPQRVKNQGTSDFLPSRPRYSWEWHSCHQHYHSMDEFSHYDLLDASTQRRVAEGHKASFCLEDTSCDYGYHRRFACTAHTQGLSPGCYDTYNADIDCQWIDITDVKPGNYILKVSVNPSYLVPESDYSNNVVRCEIRYTGHHAYASGCTISPY.

Tyr19 bears the Sulfotyrosine mark. The tract at residues 45 to 249 is lysyl-oxidase like; it reads PDLVPDPYYI…YASGCTISPY (205 aa). Cystine bridges form between Cys70–Cys76, Cys123–Cys172, Cys156–Cys162, Cys183–Cys193, and Cys230–Cys244. His124, His126, and His128 together coordinate Cu cation. Positions 152 to 187 form a cross-link, lysine tyrosylquinone (Lys-Tyr); the sequence is KASFCLEDTSCDYGYHRRFACTAHTQGLSPGCYDTY. At Tyr187 the chain carries 2',4',5'-topaquinone.

Belongs to the lysyl oxidase family. Interacts with MFAP4. Interacts (via propeptide) with EFEMP2; this interaction is strong and facilitates formation of ternary complexes with ELN during elastic fiber assembly; this interaction limits interaction of EFEMP2 with FBLN5. The cofactor is Cu cation. Lysine tyrosylquinone residue serves as cofactor. The lysine tyrosylquinone cross-link (LTQ) is generated by condensation of the epsilon-amino group of a lysine with a topaquinone produced by oxidation of tyrosine. In terms of processing, proteolytically cleaved by BMP1 which removes the propeptide. Also proteolytically cleaved by ADAMTS2 and ADAMTS14, but not by ADAMTS3, at an additional cleavage site downstream of the BMP1 cleavage site. The propeptide plays a role in directing the deposition of this enzyme to elastic fibers, via interaction with tropoelastin. Cleavage by BMP1 to remove the propeptide does not increase enzymatic activity but increases binding to collagen. Cleavage by ADAMTS2 produces a form with reduced collagen-binding activity. Post-translationally, sulfated at Tyr-19 and also at either Tyr-15 or Tyr-16 which enhances binding to collagen.

It localises to the secreted. It is found in the extracellular space. The enzyme catalyses L-lysyl-[protein] + O2 + H2O = (S)-2-amino-6-oxohexanoyl-[protein] + H2O2 + NH4(+). In terms of biological role, responsible for the post-translational oxidative deamination of peptidyl lysine residues in precursors to fibrous collagen and elastin. Regulator of Ras expression. May play a role in tumor suppression. Plays a role in the aortic wall architecture. This chain is Protein-lysine 6-oxidase, found in Sus scrofa (Pig).